We begin with the raw amino-acid sequence, 650 residues long: Probable E3 ubiquitin ligase complex SCF subunit scon-2 (650 aa).

In terms of domain architecture, F-box spans 124 to 170 (IDFISALPVELAQKVLCYLDTVSLTKAAQVSQRWRTLADSDAVWVRM). Residues 200 to 244 (QRQLAKGGPQGRVTELADSHDSQDRSVNQHGKRPAAEAEEEDPIK) are disordered. The segment covering 214–223 (ELADSHDSQD) has biased composition (basic and acidic residues). 5 WD repeats span residues 292 to 320 (GHENGVTCLQLDDNILATGSYDTTIKIWN), 332 to 360 (GHTAGIRALQFDDSKLISGSLDHTIKVWN), 372 to 400 (AHTDSVISVHFDGHLLASGSSDKTVKIFD), 411 to 441 (GHSDWVNSTHVDIKSRTVFSASDDTTIKLWD), and 453 to 488 (GHVGHVQQVLILPPEYEPDEEVLNGASQDNQDAMSV). The interval 482–525 (NQDAMSVSSGGSGSPSMSHAQIERAGSPGSHSSSHNLLPSSLPS) is disordered. Low complexity-rich tracts occupy residues 487–499 (SVSSGGSGSPSMS) and 507–525 (GSPGSHSSSHNLLPSSLPS). 3 WD repeats span residues 528 to 564 (EDVRHLYGSAFVADESRPLPPRYFMTGGLDSTMRLWD), 576 to 604 (GHLEGVWSLAGDTIRVISGANDGMVKTWE), and 616 to 644 (GHCGPVTCVGLSDSLMASGSEDGTIRLHS).

It belongs to the WD repeat MET30/SCONB/SCON-2 family. Component of the SCF(scon-2) E3 ubiquitin ligase complex.

It functions in the pathway protein modification; protein ubiquitination. Functionally, component of the SCF(scon-2) E3 ubiquitin ligase complex involved in the regulation of sulfur metabolite repression, probably by mediating the inactivation or degradation of the metR transcription factor. The chain is Probable E3 ubiquitin ligase complex SCF subunit scon-2 (scon-2) from Neurospora crassa (strain ATCC 24698 / 74-OR23-1A / CBS 708.71 / DSM 1257 / FGSC 987).